Here is a 266-residue protein sequence, read N- to C-terminus: Glucosamine-6-phosphate deaminase (266 aa).

The Proton acceptor; for enolization step role is filled by D72. The active-site For ring-opening step is D141. Catalysis depends on H143, which acts as the Proton acceptor; for ring-opening step. Catalysis depends on E148, which acts as the For ring-opening step.

Belongs to the glucosamine/galactosamine-6-phosphate isomerase family. NagB subfamily. As to quaternary structure, homohexamer.

It catalyses the reaction alpha-D-glucosamine 6-phosphate + H2O = beta-D-fructose 6-phosphate + NH4(+). It functions in the pathway amino-sugar metabolism; N-acetylneuraminate degradation; D-fructose 6-phosphate from N-acetylneuraminate: step 5/5. Allosterically activated by N-acetylglucosamine 6-phosphate (GlcNAc6P). Catalyzes the reversible isomerization-deamination of glucosamine 6-phosphate (GlcN6P) to form fructose 6-phosphate (Fru6P) and ammonium ion. The sequence is that of Glucosamine-6-phosphate deaminase from Serratia proteamaculans (strain 568).